The chain runs to 334 residues: Anthranilate phosphoribosyltransferase (334 aa).

5-phospho-alpha-D-ribose 1-diphosphate is bound by residues Gly-81, 84–85, Thr-89, 91–94, 109–117, and Ala-121; these read GD, NIST, and KHGNRSVSS. Gly-81 serves as a coordination point for anthranilate. Ser-93 contacts Mg(2+). Residue Asn-112 participates in anthranilate binding. Arg-167 is an anthranilate binding site. Residues Asp-225 and Glu-226 each contribute to the Mg(2+) site.

Belongs to the anthranilate phosphoribosyltransferase family. Homodimer. Mg(2+) is required as a cofactor.

The catalysed reaction is N-(5-phospho-beta-D-ribosyl)anthranilate + diphosphate = 5-phospho-alpha-D-ribose 1-diphosphate + anthranilate. Its pathway is amino-acid biosynthesis; L-tryptophan biosynthesis; L-tryptophan from chorismate: step 2/5. In terms of biological role, catalyzes the transfer of the phosphoribosyl group of 5-phosphorylribose-1-pyrophosphate (PRPP) to anthranilate to yield N-(5'-phosphoribosyl)-anthranilate (PRA). The polypeptide is Anthranilate phosphoribosyltransferase (Histophilus somni (strain 2336) (Haemophilus somnus)).